The primary structure comprises 808 residues: DNA replication licensing factor MCM3 (808 aa).

Ala-2 bears the N-acetylalanine mark. Ser-160 and Ser-275 each carry phosphoserine. An N6-acetyllysine modification is found at Lys-293. The MCM domain occupies 295–502; that stretch reads IFDQLARSLA…QDREISDHVL (208 aa). The ADP site is built by Gln-353, Leu-393, Glu-394, Ala-395, and Ala-397. The short motif at 477–480 is the Arginine finger element; the sequence is SRFD. Ala-523 is an ATP binding site. A Phosphoserine; by ATM modification is found at Ser-535. Lys-547 carries the post-translational modification N6-acetyllysine. Ser-611 is modified (phosphoserine). Residues 662 to 739 form a disordered region; it reads KKRKKRSEDE…ETKESQKVEL (78 aa). Residue Arg-664 participates in ATP binding. Phosphoserine occurs at positions 668, 672, and 681. A compositionally biased stretch (basic and acidic residues) spans 679 to 688; the sequence is EKSQEDQEQK. A Phosphotyrosine modification is found at Tyr-708. Thr-713 and Thr-722 each carry phosphothreonine. The segment covering 727–739 has biased composition (basic and acidic residues); the sequence is DSQETKESQKVEL. Ser-728 and Ser-734 each carry phosphoserine.

Belongs to the MCM family. As to quaternary structure, component of the MCM2-7 complex. The complex forms a toroidal hexameric ring with the proposed subunit order MCM2-MCM6-MCM4-MCM7-MCM3-MCM5. Component of the CMG helicase complex, a hexameric ring of related MCM2-7 subunits stabilized by CDC45 and the tetrameric GINS complex. Associated with the replication-specific DNA polymerase alpha. Interacts with MCMBP. Interacts with ANKRD17. Interacts with MCM3AP isoform MCM3AP; this interaction leads to MCM3 acetylation. Acetylated by MCM3AP. In terms of processing, O-glycosylated (O-GlcNAcylated), in a cell cycle-dependent manner.

It localises to the nucleus. The protein localises to the chromosome. It catalyses the reaction ATP + H2O = ADP + phosphate + H(+). Its function is as follows. Acts as a component of the MCM2-7 complex (MCM complex) which is the replicative helicase essential for 'once per cell cycle' DNA replication initiation and elongation in eukaryotic cells. Core component of CDC45-MCM-GINS (CMG) helicase, the molecular machine that unwinds template DNA during replication, and around which the replisome is built. The active ATPase sites in the MCM2-7 ring are formed through the interaction surfaces of two neighboring subunits such that a critical structure of a conserved arginine finger motif is provided in trans relative to the ATP-binding site of the Walker A box of the adjacent subunit. The six ATPase active sites, however, are likely to contribute differentially to the complex helicase activity. Required for the entry in S phase and for cell division. The chain is DNA replication licensing factor MCM3 (MCM3) from Bos taurus (Bovine).